The following is a 758-amino-acid chain: 1-phosphatidylinositol 4,5-bisphosphate phosphodiesterase delta-4 (758 aa).

A PH domain is found at 16 to 124 (QLMQAGSPMR…WIQGLEKLIE (109 aa)). A substrate binding region spans residues 26–53 (KVKSRSWKKQRYFKLQEDCMTIWYNSKK). EF-hand domains follow at residues 134 to 169 (LMDQ…MNVD), 170 to 205 (MSEH…LTQR), and 206 to 237 (DEVL…GQLE). Residues aspartate 147, asparagine 149, aspartate 151, arginine 153, glutamate 158, aspartate 183, serine 185, serine 187, threonine 189, and glutamate 194 each contribute to the Ca(2+) site. A GBA motif is present at residues 213–243 (QDFSKDGKKLTLLEFVDFLQQGQLEEENTEE). The 146-residue stretch at 290–435 (QDMMQPLCHY…LRGKILLKGK (146 aa)) folds into the PI-PLC X-box domain. Residue histidine 305 is part of the active site. The Ca(2+) site is built by asparagine 306, glutamate 335, and aspartate 337. Histidine 350 is an active-site residue. Glutamate 384 serves as a coordination point for Ca(2+). Residues lysine 433 and lysine 435 each coordinate substrate. The span at 446 to 468 (EQPDDSLGEVSDEEENIEVEEER) shows a compositional bias: acidic residues. The tract at residues 446–479 (EQPDDSLGEVSDEEENIEVEEERNEDKKRAKKSK) is disordered. The PI-PLC Y-box domain occupies 486-602 (LSDCVIYCKS…GYVLKPSFMR (117 aa)). Residues serine 515 and arginine 542 each coordinate substrate. The C2 domain occupies 602–731 (RHVETTFNPD…SGYRHIHLLS (130 aa)). Ca(2+) is bound by residues isoleucine 645, aspartate 647, asparagine 671, aspartate 700, tyrosine 701, and aspartate 702. Positions 726–729 (HIHL) match the PDZ-binding motif.

The cofactor is Ca(2+).

The protein resides in the membrane. It localises to the nucleus. Its subcellular location is the cytoplasm. The protein localises to the endoplasmic reticulum. It catalyses the reaction a 1,2-diacyl-sn-glycero-3-phospho-(1D-myo-inositol-4,5-bisphosphate) + H2O = 1D-myo-inositol 1,4,5-trisphosphate + a 1,2-diacyl-sn-glycerol + H(+). The catalysed reaction is a 1,2-diacyl-sn-glycero-3-phospho-(1D-myo-inositol) + H2O = 1D-myo-inositol 1-phosphate + a 1,2-diacyl-sn-glycerol + H(+). Its function is as follows. Hydrolyzes the phosphatidylinositol 4,5-bisphosphate (PIP2) to generate 2 second messenger molecules diacylglycerol (DAG) and inositol 1,4,5-trisphosphate (IP3). DAG mediates the activation of protein kinase C (PKC), while IP3 releases Ca(2+) from intracellular stores. In Xenopus laevis (African clawed frog), this protein is 1-phosphatidylinositol 4,5-bisphosphate phosphodiesterase delta-4 (plcd4).